The sequence spans 412 residues: uncharacterized protein (412 aa).

The span at 1–17 (MPSQGNNKNSENITQNP) shows a compositional bias: polar residues. Disordered stretches follow at residues 1–20 (MPSQ…PIEG), 223–243 (EQAV…ARQT), and 310–412 (QKQM…NPVA). A compositionally biased stretch (polar residues) spans 340-355 (KLNSNTRGSSKRPSVN). The span at 361–379 (GQRGRGGRGFYRGGRGRGG) shows a compositional bias: gly residues. Residues 390-402 (SNSNNSTSQPSPN) are compositionally biased toward low complexity. Residues 403–412 (AELSNFNPVA) are compositionally biased toward polar residues.

This is an uncharacterized protein from Schizosaccharomyces pombe (strain 972 / ATCC 24843) (Fission yeast).